The sequence spans 248 residues: ATP synthase subunit a, chloroplastic (248 aa).

The next 5 helical transmembrane spans lie at 38 to 58 (QVLITSWVVIAILLGSAAIAV), 96 to 116 (VPFIGTLFLFIFVSNWSGALL), 135 to 155 (INTTVALALPTSVAYFYAGLT), 200 to 220 (LVVVVLVSLVPLVIPIPVMFL), and 221 to 241 (GLFTSGIQALIFATLAAAYIG).

The protein belongs to the ATPase A chain family. F-type ATPases have 2 components, CF(1) - the catalytic core - and CF(0) - the membrane proton channel. CF(1) has five subunits: alpha(3), beta(3), gamma(1), delta(1), epsilon(1). CF(0) has four main subunits: a, b, b' and c.

Its subcellular location is the plastid. The protein resides in the chloroplast thylakoid membrane. In terms of biological role, key component of the proton channel; it plays a direct role in the translocation of protons across the membrane. In Nymphaea alba (White water-lily), this protein is ATP synthase subunit a, chloroplastic.